The sequence spans 110 residues: Large ribosomal subunit protein P2 (110 aa).

An O-(pantetheine 4'-phosphoryl)serine; in acyl carrier protein form modification is found at Ser-59. The segment at 62–110 is disordered; it reads LASVPSGGAAPAAAAGGAAAGGAAEEKAEDKPAEKDEESDDDMGFGLFD. Residues 63 to 84 are compositionally biased toward low complexity; that stretch reads ASVPSGGAAPAAAAGGAAAGGA. Basic and acidic residues predominate over residues 85-95; that stretch reads AEEKAEDKPAE. Ser-100 carries the post-translational modification Phosphoserine; in ribosomal stalk form.

It belongs to the eukaryotic ribosomal protein P1/P2 family. In terms of assembly, the phosphorylated form is part of the ribosomal stalk involved in the interaction of the elongation factors with the ribosome during protein synthesis. The phosphopantetheinylated form is part of the 10S triacylglycerol biosynthetic complex involved in de novo fatty acid biosynthesis. Post-translationally, 4'-phosphopantetheine is transferred from CoA to a specific serine by acpS. This modification is essential for activity because fatty acids are bound in thioester linkage to the sulfhydryl of the prosthetic group.

Its subcellular location is the cytoplasm. Its function is as follows. Probable bifunctional protein. The phosphorylated protein plays an important role in the elongation step of protein synthesis. The phosphopantetheinylated protein acts as an acyl carrier protein. The protein is Large ribosomal subunit protein P2 of Rhodotorula glutinis (Yeast).